Reading from the N-terminus, the 185-residue chain is Acireductone dioxygenase (185 aa).

Fe(2+) contacts are provided by histidine 96, histidine 98, glutamate 102, and histidine 140. Positions 96, 98, 102, and 140 each coordinate Ni(2+).

Belongs to the acireductone dioxygenase (ARD) family. As to quaternary structure, monomer. Fe(2+) is required as a cofactor. Ni(2+) serves as cofactor.

The catalysed reaction is 1,2-dihydroxy-5-(methylsulfanyl)pent-1-en-3-one + O2 = 3-(methylsulfanyl)propanoate + CO + formate + 2 H(+). The enzyme catalyses 1,2-dihydroxy-5-(methylsulfanyl)pent-1-en-3-one + O2 = 4-methylsulfanyl-2-oxobutanoate + formate + 2 H(+). It participates in amino-acid biosynthesis; L-methionine biosynthesis via salvage pathway; L-methionine from S-methyl-5-thio-alpha-D-ribose 1-phosphate: step 5/6. In terms of biological role, catalyzes 2 different reactions between oxygen and the acireductone 1,2-dihydroxy-3-keto-5-methylthiopentene (DHK-MTPene) depending upon the metal bound in the active site. Fe-containing acireductone dioxygenase (Fe-ARD) produces formate and 2-keto-4-methylthiobutyrate (KMTB), the alpha-ketoacid precursor of methionine in the methionine recycle pathway. Ni-containing acireductone dioxygenase (Ni-ARD) produces methylthiopropionate, carbon monoxide and formate, and does not lie on the methionine recycle pathway. The chain is Acireductone dioxygenase from Hahella chejuensis (strain KCTC 2396).